The chain runs to 569 residues: Putative diguanylate cyclase DgcQ (569 aa).

The next 2 membrane-spanning stretches (helical) occupy residues 25-45 (LGPGHVVNLCFIVVLLFSTLL) and 365-385 (IALTLLWALFTTMLLLSWYVI). A GGDEF domain is found at 433–568 (HPFSVIQVDL…GRNRVFASDN (136 aa)). Asp-441 serves as a coordination point for Mg(2+). Substrate is bound by residues Asn-449, His-454, and Asp-458. Glu-484 is a Mg(2+) binding site. Glu-484 (proton acceptor) is an active-site residue.

As to quaternary structure, homodimer. Mg(2+) serves as cofactor.

The protein localises to the cell inner membrane. It carries out the reaction 2 GTP = 3',3'-c-di-GMP + 2 diphosphate. The protein operates within glycan metabolism; bacterial cellulose biosynthesis. It participates in purine metabolism; 3',5'-cyclic di-GMP biosynthesis. Its function is as follows. Catalyzes the synthesis of cyclic-di-GMP (c-di-GMP) via the condensation of 2 GTP molecules. Cyclic-di-GMP is a second messenger which controls cell surface-associated traits in bacteria. Involved in the regulation of cellulose production. In Shigella flexneri, this protein is Putative diguanylate cyclase DgcQ.